We begin with the raw amino-acid sequence, 965 residues long: Argonaute protein wago-4 (965 aa).

Positions 1 to 34 are disordered; that stretch reads MPALPPVYTPSGAPSSVHAPPAVPPVPVPTQPLR. The segment covering 10 to 20 has biased composition (low complexity); the sequence is PSGAPSSVHAP. A compositionally biased stretch (pro residues) spans 21 to 30; sequence PAVPPVPVPT. Residues 318 to 428 form the PAZ domain; the sequence is PILDKLKEIT…YPMELLKISS (111 aa). A Piwi domain is found at 594–924; that stretch reads TFVFIITDDS…YAKRGRNLWN (331 aa).

This sequence belongs to the argonaute family. WAGO subfamily. In terms of assembly, interacts with znfx-1; the interaction promotes the transmission of epigenetic information across generations. May interact with mina-1. Expressed in the hermaphrodite germline and in oocytes. Expressed at a low level in the male germline. Not expressed in the soma of hermaphrodites or males.

The protein localises to the cytoplasm. It localises to the perinuclear region. Its subcellular location is the cytoplasmic granule. Argonaute protein which is involved in the endogenous small interfering RNA (endo-siRNA) pathway and is required for RNA-mediated gene silencing (RNAi) in the germline. Interacts with secondary 22G-RNAs, which are RNA-dependent RNA polymerase-derived endo-siRNAs, typically 22 nucleotides in length with a 5'guanosine residue. Also interacts with the mRNA targets of 22G-RNAs. Associates with znfx-1 to mediate small RNA-directed transgenerational epigenetic inheritance of both germline- and soma-expressed genes. In Caenorhabditis elegans, this protein is Argonaute protein wago-4.